We begin with the raw amino-acid sequence, 325 residues long: Elongation factor P--(R)-beta-lysine ligase (325 aa).

Residue Ser-76 to Glu-78 participates in substrate binding. ATP-binding positions include Arg-100 to Glu-102 and Asn-109. Residue Tyr-118 coordinates substrate. Glu-244–Leu-245 contacts ATP. A substrate-binding site is contributed by Glu-251. Residue Gly-300 participates in ATP binding.

The protein belongs to the class-II aminoacyl-tRNA synthetase family. EpmA subfamily. As to quaternary structure, homodimer.

It carries out the reaction D-beta-lysine + L-lysyl-[protein] + ATP = N(6)-((3R)-3,6-diaminohexanoyl)-L-lysyl-[protein] + AMP + diphosphate + H(+). Its function is as follows. With EpmB is involved in the beta-lysylation step of the post-translational modification of translation elongation factor P (EF-P). Catalyzes the ATP-dependent activation of (R)-beta-lysine produced by EpmB, forming a lysyl-adenylate, from which the beta-lysyl moiety is then transferred to the epsilon-amino group of a conserved specific lysine residue in EF-P. The chain is Elongation factor P--(R)-beta-lysine ligase from Proteus mirabilis (strain HI4320).